The chain runs to 622 residues: Palmitoyltransferase ZDHHC13 (622 aa).

Position 1 is an N-acetylmethionine (methionine 1). Residues 1–291 are Cytoplasmic-facing; that stretch reads MEGPGLGSQC…RLWRWLHKCE (291 aa). ANK repeat units lie at residues 43-78, 81-110, 115-144, 148-177, 181-211, 216-245, and 249-277; these read PLIE…VRQP, ENVS…VIDQ, LNST…DPTL, EGFS…SVNM, NGQT…SLSV, HQNT…SLDI, and KGET…KMRA. Residues 292–312 traverse the membrane as a helical segment; the sequence is LFLLLILSMITLWAVGYILDF. Over 313–320 the chain is Lumenal; that stretch reads NSDSWLLK. A helical membrane pass occupies residues 321 to 341; the sequence is GCLLVALFFLTSLFPRFLVGY. At 342–347 the chain is on the cytoplasmic side; it reads KNLVYL. The helical transmembrane segment at 348-368 threads the bilayer; that stretch reads PTVFLLSSIFWIFMTWFILFF. Over 369–371 the chain is Lumenal; it reads PDT. Residues 372–392 form a helical membrane-spanning segment; sequence AGSPLYFAFIFSIMAFLYFFY. Over 393 to 470 the chain is Cytoplasmic; that stretch reads KTWATDPGFT…RCIGFGNHHH (78 aa). The DHHC domain maps to 426 to 476; sequence TFCTSCLIRKPLRSLHCHVCNSCVARFDQHCFWTGRCIGFGNHHHYIFFLL. Cysteine 456 functions as the S-palmitoyl cysteine intermediate in the catalytic mechanism. A helical membrane pass occupies residues 471–491; it reads YIFFLLSLSMVCDWIIYGSFV. Residues 492 to 518 are Lumenal-facing; sequence YWSNHCATTFKEDGLWTYLNQIVACSP. Residues 519-539 form a helical membrane-spanning segment; it reads WVLYIFMLAAFHFSWSTFLLI. Residues 540–622 lie on the Cytoplasmic side of the membrane; it reads NQLFQIAFLG…PAKEKVLRSV (83 aa).

Belongs to the DHHC palmitoyltransferase family. AKR/ZDHHC17 subfamily. As to quaternary structure, interacts (via ANK repeats) with CLIP3. Interacts (via ANK repeats) with DNAJC5 (via C-terminus). Interacts (via ANK repeats) with HTT. Interacts (via ANK repeats) with MAP6. Interacts (via ANK repeats) with SNAP23. Interacts (via ANK repeats) with SNAP25. May interact (via ANK repeats) with SPRED2. As to expression, expressed in most adult tissues, but at low levels in the liver, skin, and lung.

It localises to the golgi apparatus membrane. The protein resides in the cytoplasmic vesicle membrane. It carries out the reaction L-cysteinyl-[protein] + hexadecanoyl-CoA = S-hexadecanoyl-L-cysteinyl-[protein] + CoA. Its function is as follows. Palmitoyltransferase that could catalyze the addition of palmitate onto various protein substrates. Palmitoyltransferase for HTT and GAD2. May play a role in Mg(2+) transport. The sequence is that of Palmitoyltransferase ZDHHC13 from Mus musculus (Mouse).